The following is a 797-amino-acid chain: RAS guanyl-releasing protein 1 (797 aa).

The segment covering 1–12 (MGTLGKAREAPR) has biased composition (basic and acidic residues). A disordered region spans residues 1 to 23 (MGTLGKAREAPRKPSHGCRAASK). Residues 53-176 (LGHLAKGASL…RLIDTTQINA (124 aa)) form the N-terminal Ras-GEF domain. The segment at 57–110 (AKGASLDDLIDSCIQSFDADGNLCRSNQLLQVMLTMHRIVISSAELLQKVITLY) is ras exchanger motif region; required for transforming activity. The residue at position 184 (Thr184) is a Phosphothreonine; by PKC. The Ras-GEF domain occupies 205–436 (EPEELSEHLT…YELSYAREPR (232 aa)). 2 EF-hand domains span residues 470–505 (HVQRMVDSVFKNYDHDQDGYISQEEFEKIAASFPFS) and 506–532 (FCVMDKDREGLISRDEITAYFMRASSI). 5 residues coordinate Ca(2+): Asp483, Asp485, Asp487, Tyr489, and Glu494. Residues 541–591 (PHNFQETTYLKPTFCDNCAGFLWGVIKQGYRCKDCGMNCHKQCKDLVVFEC) form a Phorbol-ester/DAG-type zinc finger. Residues 673-694 (TQTESQPWIGSEGPSGPFVLSS) are disordered. Residues 686 to 694 (PSGPFVLSS) form a suppress the PT region-mediated translocation to plasma membrane region. The segment at 718 to 797 (LVRKRAFVKW…LAQMEQGDCS (80 aa)) is PT region; mediates the BCR-dependent translocation to plasma membrane. Residues 746-786 (PTYQELEQEINTLKADNDALKIQLKYAQKKIESLQLEKSNH) are a coiled coil.

Belongs to the RASGRP family. As to quaternary structure, homodimer. Forms a signaling complex with DGKZ and HRAS. Interacts with F-actin. Interacts with SKAP1. Expressed in brain with higher expression in cerebellum, cerebral cortex and amygdala. Expressed in the hematopoietic system. Expressed in T-cells (at protein level). Expressed in NK cells (at protein level).

The protein localises to the cytoplasm. It is found in the cytosol. It localises to the cell membrane. Its subcellular location is the golgi apparatus membrane. The protein resides in the endoplasmic reticulum membrane. Autoinhibited. Activated by diacylglycerol and calcium binding, which induces a conformational change releasing the autoinhibitory state. Regulated by DGKA. Regulated by DGKZ. Regulated by PLC gamma and F-actin polymerization. Functionally, functions as a calcium- and diacylglycerol (DAG)-regulated nucleotide exchange factor specifically activating Ras through the exchange of bound GDP for GTP. Activates the Erk/MAP kinase cascade. Regulates T-cell/B-cell development, homeostasis and differentiation by coupling T-lymphocyte/B-lymphocyte antigen receptors to Ras. Regulates NK cell cytotoxicity and ITAM-dependent cytokine production by activation of Ras-mediated ERK and JNK pathways. Functions in mast cell degranulation and cytokine secretion, regulating FcERI-evoked allergic responses. May also function in differentiation of other cell types. The protein is RAS guanyl-releasing protein 1 (RASGRP1) of Homo sapiens (Human).